The primary structure comprises 341 residues: MGKLELLQTLTGHAGRVWSAAWHPGGKLFASCGEDKTIRVWNKSDTDRWVAQTVLTDGHTRTIRELAWSCCGHYLASASFDTTVAVWDKKSGEFECNATLEGHDNEVKSVTWSRSGNLLATCSRDKSVWIWEIHHAPDQEDEYECVAVLNGHTQDVKKVCWHPQEDLLASASYDNTIRMYRQDLADSEWEMLEPLESHSSTVWSISFDATGQRLASCSEDTTVKVWQQYGPDNALGIPCPDRGTIWKCVCTLSGYHSRSVYDIDWCKQTGLLATACGDDTVRIFREASDSDRNEPTFELVVTVEAHSQDANKVAWHPTVPGLLLTASDDGEIKLWQYVDAD.

7 WD repeats span residues 12–51, 58–97, 102–141, 151–190, 197–236, 255–294, and 305–341; these read GHAGRVWSAAWHPGGKLFASCGEDKTIRVWNKSDTDRWVA, GHTRTIRELAWSCCGHYLASASFDTTVAVWDKKSGEFECN, GHDNEVKSVTWSRSGNLLATCSRDKSVWIWEIHHAPDQED, GHTQDVKKVCWHPQEDLLASASYDNTIRMYRQDLADSEWE, SHSSTVWSISFDATGQRLASCSEDTTVKVWQQYGPDNALG, YHSRSVYDIDWCKQTGLLATACGDDTVRIFREASDSDRNE, and AHSQDANKVAWHPTVPGLLLTASDDGEIKLWQYVDAD.

The protein belongs to the WD repeat CIA1 family.

Its function is as follows. Essential component of the cytosolic iron-sulfur (Fe/S) protein assembly machinery. Required for the maturation of extramitochondrial Fe/S proteins. The chain is Probable cytosolic iron-sulfur protein assembly protein Ciao1 from Anopheles gambiae (African malaria mosquito).